A 500-amino-acid chain; its full sequence is MTIFDNYEVWFVIGSQHLYGAETLRQVTQHAEHVVNALNTEAKLPCKLVLKPLGTSPDEITAICRDANYDDRCAGLVVWLHTFSPAKMWINGLSILNKPLLQFHTQFNAALPWDSIDMDFMNLNQTAHGGREFGFIGARMRQQHSVVTGHWQDKEAHTRIGAWMRQAVSKQDTRQLKVCRFGDNMREVAVTDGDKVAAQIKFGFSVNTWAVGDLVQVVNAISDGDINALIDEYESSYTLTPATRIHGDKRQNVREAARIELGMKRFLEQGGFHAFTTTFEDLHGLKQLPGLAVQRLMQQGYGFAGEGDWKTAALLRIMKVMSTGLQGGTSFMEDYTYHFEKGNDLVLGSHMLEVCPSIAVEEKPILDVQHLGIGGKEDPARLIFNTQTGPAIVASLIDLGDRYRLLVNCIDTVKTPHSLPKLPVANALWKAQPDLPTASEAWILAGGAHHTVFSHALDLNDMRQFAEIHDIEIAVIDNDTRLPAFKDALRWNEVYYGFKR.

Residues Glu306, Glu333, His350, and His450 each contribute to the Mn(2+) site.

This sequence belongs to the arabinose isomerase family. As to quaternary structure, homohexamer. Mn(2+) is required as a cofactor.

The catalysed reaction is beta-L-arabinopyranose = L-ribulose. The protein operates within carbohydrate degradation; L-arabinose degradation via L-ribulose; D-xylulose 5-phosphate from L-arabinose (bacterial route): step 1/3. Its function is as follows. Catalyzes the conversion of L-arabinose to L-ribulose. In Salmonella enteritidis PT4 (strain P125109), this protein is L-arabinose isomerase.